Here is a 418-residue protein sequence, read N- to C-terminus: Dihydrolipoyllysine-residue acetyltransferase component of pyruvate dehydrogenase complex (418 aa).

The Lipoyl-binding domain occupies 2–78 (PIKLLMPALS…PVNSLIAVLI (77 aa)). Lys-43 is modified (N6-lipoyllysine). Residues 133 to 170 (FASPLAKRLAKIQNVRIEEIKGSGPHGRIIKQDVLSHK) enclose the Peripheral subunit-binding (PSBD) domain. His-388 is an active-site residue.

Belongs to the 2-oxoacid dehydrogenase family. As to quaternary structure, forms a 24-polypeptide structural core with octahedral symmetry. It depends on (R)-lipoate as a cofactor.

The catalysed reaction is N(6)-[(R)-dihydrolipoyl]-L-lysyl-[protein] + acetyl-CoA = N(6)-[(R)-S(8)-acetyldihydrolipoyl]-L-lysyl-[protein] + CoA. In terms of biological role, the pyruvate dehydrogenase complex catalyzes the overall conversion of pyruvate to acetyl-CoA and CO(2). It contains multiple copies of three enzymatic components: pyruvate dehydrogenase (E1), dihydrolipoamide acetyltransferase (E2) and lipoamide dehydrogenase (E3). The sequence is that of Dihydrolipoyllysine-residue acetyltransferase component of pyruvate dehydrogenase complex (pdhC) from Rickettsia bellii (strain RML369-C).